We begin with the raw amino-acid sequence, 220 residues long: Competence protein ComFC (220 aa).

The protein belongs to the ComF/GntX family. In terms of assembly, monomer and dimer in solution. Interacts with ComFA and DprA; ComFA-ComFC form rings about 150 Angstroms in diameter with apparent 6-fold symmetry.

Involved in transformation (genetic competence for DNA uptake). This Streptococcus pneumoniae (strain ATCC BAA-255 / R6) protein is Competence protein ComFC.